The primary structure comprises 261 residues: Indole-3-glycerol phosphate synthase (261 aa).

This sequence belongs to the TrpC family.

It catalyses the reaction 1-(2-carboxyphenylamino)-1-deoxy-D-ribulose 5-phosphate + H(+) = (1S,2R)-1-C-(indol-3-yl)glycerol 3-phosphate + CO2 + H2O. It functions in the pathway amino-acid biosynthesis; L-tryptophan biosynthesis; L-tryptophan from chorismate: step 4/5. In Oceanobacillus iheyensis (strain DSM 14371 / CIP 107618 / JCM 11309 / KCTC 3954 / HTE831), this protein is Indole-3-glycerol phosphate synthase.